Here is a 65-residue protein sequence, read N- to C-terminus: Large ribosomal subunit protein bL33m (65 aa).

The N-terminal 8 residues, 1–8 (MFLSAVTF), are a transit peptide targeting the mitochondrion.

Belongs to the bacterial ribosomal protein bL33 family. In terms of assembly, component of the mitochondrial ribosome large subunit (39S) which comprises a 16S rRNA and about 50 distinct proteins.

The protein resides in the mitochondrion. The protein is Large ribosomal subunit protein bL33m (MRPL33) of Bos taurus (Bovine).